Here is a 545-residue protein sequence, read N- to C-terminus: 2-oxo-Delta(3)-4,5,5-trimethylcyclopentenylacetyl-CoA monooxygenase (545 aa).

FAD is bound by residues threonine 20, glutamate 39, 47 to 50 (TWYW), 59 to 60 (DT), tyrosine 65, and valine 112. 57 to 59 (RLD) is an NADP(+) binding site. Residues 193–199 (TGATGVQ) and 216–217 (RT) each bind NADP(+). Valine 446 provides a ligand contact to FAD. An NADP(+)-binding site is contributed by tryptophan 501.

The protein belongs to the FAD-binding monooxygenase family. As to quaternary structure, homodimer. It depends on FAD as a cofactor.

It catalyses the reaction [(1R)-2,2,3-trimethyl-5-oxocyclopent-3-enyl]acetyl-CoA + NADPH + O2 + H(+) = [(2R)-3,3,4-trimethyl-6-oxo-3,6-dihydro-1H-pyran-2-yl]acetyl-CoA + NADP(+) + H2O. The protein operates within terpene metabolism; (R)-camphor degradation. Its function is as follows. Involved in the degradation of (+)-camphor. Catalyzes the lactonization of 2-oxo-delta(3)-4,5, 5-trimethylcyclopentenylacetyl-CoA (OT-CoA), a key intermediate in the metabolism of camphor. 2-Oxocyclopentyl ethyl acetate is also a good substrate, as is 2-oxocyclohexyl ethyl acetate and methyl-substituted cyclohexanones, but free acid is a poor substrate. The protein is 2-oxo-Delta(3)-4,5,5-trimethylcyclopentenylacetyl-CoA monooxygenase (otemo) of Pseudomonas putida (Arthrobacter siderocapsulatus).